A 236-amino-acid polypeptide reads, in one-letter code: MNQDQLKQMVGEAARDEVLKLPAGQVLGVGTGSTANYFIDALALHKGHFAGTVSSSNATTERLLKHGFKVLDPNDVQGLPAYVDGADEIDPAGHMIKGGGGVLTGEKIIASMAKQFICICDSSKQVPVLGNFALPVEIIPLSQGVVSRELEKFGGRVTLRLAKHTRADLNQTPSEPFVTDNGGWILDVAGLRIASPAQMEAQINQIAGVITVGLFAKEKANILLVSNAAGVERIQF.

Substrate is bound by residues 31–34, 84–87, and 97–100; these read TGST, DGAD, and KGGG. The active-site Proton acceptor is the Glu106. Lys124 contacts substrate.

It belongs to the ribose 5-phosphate isomerase family. As to quaternary structure, homodimer.

It carries out the reaction aldehydo-D-ribose 5-phosphate = D-ribulose 5-phosphate. The protein operates within carbohydrate degradation; pentose phosphate pathway; D-ribose 5-phosphate from D-ribulose 5-phosphate (non-oxidative stage): step 1/1. Functionally, catalyzes the reversible conversion of ribose-5-phosphate to ribulose 5-phosphate. This chain is Ribose-5-phosphate isomerase A, found in Polynucleobacter necessarius subsp. necessarius (strain STIR1).